Consider the following 404-residue polypeptide: Ammonium transporter (404 aa).

9 helical membrane-spanning segments follow: residues Val-7–Tyr-27, Phe-44–Ala-64, Leu-96–Phe-116, Phe-125–Trp-145, Phe-158–Val-178, Ile-227–Ile-247, Leu-254–Val-274, Phe-277–Leu-297, and Ile-352–Ile-372.

Belongs to the ammonia transporter channel (TC 1.A.11.2) family. Interacts with NrgB for a correct localization of the latter. GlnK-AmtB complex interacts with TnrA.

It is found in the cell membrane. Its function is as follows. Functions as an ammonium and methylammonium transporter in the absence of glutamine. Required for ammonium utilization at low concentrations or at low pH values, when ammonium is the single nitrogen source. Required for binding of NrgB to the membrane. Interaction between GlnK-AmtB complex and TnrA protects TnrA from proteolytic degradation. This Bacillus subtilis (strain 168) protein is Ammonium transporter.